A 123-amino-acid chain; its full sequence is Ribosome-binding factor A (123 aa).

The protein belongs to the RbfA family. As to quaternary structure, monomer. Binds 30S ribosomal subunits, but not 50S ribosomal subunits or 70S ribosomes.

The protein localises to the cytoplasm. One of several proteins that assist in the late maturation steps of the functional core of the 30S ribosomal subunit. Associates with free 30S ribosomal subunits (but not with 30S subunits that are part of 70S ribosomes or polysomes). Required for efficient processing of 16S rRNA. May interact with the 5'-terminal helix region of 16S rRNA. In Legionella pneumophila (strain Paris), this protein is Ribosome-binding factor A.